The following is a 443-amino-acid chain: Alpha-amylase (443 aa).

The signal sequence occupies residues 1 to 24 (MHNTLFRTALLAAALGSFSHTASA). Substrate contacts are provided by His-114 and Arg-196. Asp-198 functions as the Nucleophile in the catalytic mechanism. 201–202 (KH) contacts substrate. Glu-223 acts as the Proton donor in catalysis. Substrate contacts are provided by Gly-228 and His-287.

The protein belongs to the glycosyl hydrolase 13 family.

The protein resides in the secreted. The catalysed reaction is Endohydrolysis of (1-&gt;4)-alpha-D-glucosidic linkages in polysaccharides containing three or more (1-&gt;4)-alpha-linked D-glucose units.. This Aeromonas hydrophila protein is Alpha-amylase (amyA).